The primary structure comprises 213 residues: Small ribosomal subunit protein uS3c (213 aa).

One can recognise a KH type-2 domain in the interval 39-109 (IRKYLNAKLA…KFRITITYLQ (71 aa)).

Belongs to the universal ribosomal protein uS3 family. In terms of assembly, part of the 30S ribosomal subunit.

Its subcellular location is the plastid. The protein resides in the chloroplast. The protein is Small ribosomal subunit protein uS3c (rps3) of Mesostigma viride (Green alga).